Here is a 313-residue protein sequence, read N- to C-terminus: 4-hydroxy-3-methylbut-2-enyl diphosphate reductase (313 aa).

A [4Fe-4S] cluster-binding site is contributed by Cys-12. Positions 41 and 74 each coordinate (2E)-4-hydroxy-3-methylbut-2-enyl diphosphate. Residues His-41 and His-74 each contribute to the dimethylallyl diphosphate site. Positions 41 and 74 each coordinate isopentenyl diphosphate. Residue Cys-96 coordinates [4Fe-4S] cluster. (2E)-4-hydroxy-3-methylbut-2-enyl diphosphate is bound at residue His-124. His-124 lines the dimethylallyl diphosphate pocket. Residue His-124 participates in isopentenyl diphosphate binding. The Proton donor role is filled by Glu-126. Thr-164 is a (2E)-4-hydroxy-3-methylbut-2-enyl diphosphate binding site. Cys-194 is a [4Fe-4S] cluster binding site. Positions 222, 223, 224, and 266 each coordinate (2E)-4-hydroxy-3-methylbut-2-enyl diphosphate. Residues Ser-222, Ser-223, Asn-224, and Ser-266 each contribute to the dimethylallyl diphosphate site. The isopentenyl diphosphate site is built by Ser-222, Ser-223, Asn-224, and Ser-266.

The protein belongs to the IspH family. [4Fe-4S] cluster serves as cofactor.

It carries out the reaction isopentenyl diphosphate + 2 oxidized [2Fe-2S]-[ferredoxin] + H2O = (2E)-4-hydroxy-3-methylbut-2-enyl diphosphate + 2 reduced [2Fe-2S]-[ferredoxin] + 2 H(+). The catalysed reaction is dimethylallyl diphosphate + 2 oxidized [2Fe-2S]-[ferredoxin] + H2O = (2E)-4-hydroxy-3-methylbut-2-enyl diphosphate + 2 reduced [2Fe-2S]-[ferredoxin] + 2 H(+). The protein operates within isoprenoid biosynthesis; dimethylallyl diphosphate biosynthesis; dimethylallyl diphosphate from (2E)-4-hydroxy-3-methylbutenyl diphosphate: step 1/1. It participates in isoprenoid biosynthesis; isopentenyl diphosphate biosynthesis via DXP pathway; isopentenyl diphosphate from 1-deoxy-D-xylulose 5-phosphate: step 6/6. Its function is as follows. Catalyzes the conversion of 1-hydroxy-2-methyl-2-(E)-butenyl 4-diphosphate (HMBPP) into a mixture of isopentenyl diphosphate (IPP) and dimethylallyl diphosphate (DMAPP). Acts in the terminal step of the DOXP/MEP pathway for isoprenoid precursor biosynthesis. The protein is 4-hydroxy-3-methylbut-2-enyl diphosphate reductase of Burkholderia pseudomallei (strain 1026b).